We begin with the raw amino-acid sequence, 156 residues long: Small ribosomal subunit protein uS7 (156 aa).

Belongs to the universal ribosomal protein uS7 family. In terms of assembly, part of the 30S ribosomal subunit. Contacts proteins S9 and S11.

One of the primary rRNA binding proteins, it binds directly to 16S rRNA where it nucleates assembly of the head domain of the 30S subunit. Is located at the subunit interface close to the decoding center, probably blocks exit of the E-site tRNA. The protein is Small ribosomal subunit protein uS7 of Treponema denticola (strain ATCC 35405 / DSM 14222 / CIP 103919 / JCM 8153 / KCTC 15104).